Reading from the N-terminus, the 362-residue chain is Photosystem II protein D1 3 (362 aa).

A run of 3 helical transmembrane segments spans residues 29–46 (YVGW…SATI), 118–133 (HFLI…EWEL), and 142–156 (WICI…AATA). H118 provides a ligand contact to chlorophyll a. Y126 contacts pheophytin a. Positions 170 and 189 each coordinate [CaMn4O5] cluster. A helical membrane pass occupies residues 197–218 (FHMLGVAGVFGGALISAMHGSL). H198 provides a ligand contact to chlorophyll a. A quinone is bound by residues H215 and 264 to 265 (AF). H215 provides a ligand contact to Fe cation. H274 is a Fe cation binding site. Residues 276–290 (IMAAFPVIGIWFTSL) traverse the membrane as a helical segment. The [CaMn4O5] cluster site is built by H334, E335, D344, and A346. Positions 347–362 (GTESAPVAVSTAKVGG) are excised as a propeptide.

This sequence belongs to the reaction center PufL/M/PsbA/D family. As to quaternary structure, PSII is composed of 1 copy each of membrane proteins PsbA, PsbB, PsbC, PsbD, PsbE, PsbF, PsbH, PsbI, PsbJ, PsbK, PsbL, PsbM, PsbT, PsbX, Psb30/Ycf12, peripheral proteins PsbO, CyanoQ (PsbQ), PsbU, PsbV and a large number of cofactors. It forms dimeric complexes. The cofactor is The D1/D2 heterodimer binds P680, chlorophylls that are the primary electron donor of PSII, and subsequent electron acceptors. It shares a non-heme iron and each subunit binds pheophytin, quinone, additional chlorophylls, carotenoids and lipids. D1 provides most of the ligands for the Mn4-Ca-O5 cluster of the oxygen-evolving complex (OEC). There is also a Cl(-1) ion associated with D1 and D2, which is required for oxygen evolution. The PSII complex binds additional chlorophylls, carotenoids and specific lipids.. Post-translationally, tyr-161 forms a radical intermediate that is referred to as redox-active TyrZ, YZ or Y-Z. C-terminally processed by CtpA; processing is essential to allow assembly of the oxygen-evolving complex and thus photosynthetic growth.

It localises to the cell inner membrane. The catalysed reaction is 2 a plastoquinone + 4 hnu + 2 H2O = 2 a plastoquinol + O2. Photosystem II (PSII) is a light-driven water:plastoquinone oxidoreductase that uses light energy to abstract electrons from H(2)O, generating O(2) and a proton gradient subsequently used for ATP formation. It consists of a core antenna complex that captures photons, and an electron transfer chain that converts photonic excitation into a charge separation. The D1/D2 (PsbA/PsbD) reaction center heterodimer binds P680, the primary electron donor of PSII as well as several subsequent electron acceptors. This Gloeobacter violaceus (strain ATCC 29082 / PCC 7421) protein is Photosystem II protein D1 3.